Here is a 299-residue protein sequence, read N- to C-terminus: Bifunctional protein FolD (299 aa).

NADP(+)-binding positions include 168–170 (GRS), Ser-193, and Ile-234.

Belongs to the tetrahydrofolate dehydrogenase/cyclohydrolase family. In terms of assembly, homodimer.

The catalysed reaction is (6R)-5,10-methylene-5,6,7,8-tetrahydrofolate + NADP(+) = (6R)-5,10-methenyltetrahydrofolate + NADPH. The enzyme catalyses (6R)-5,10-methenyltetrahydrofolate + H2O = (6R)-10-formyltetrahydrofolate + H(+). The protein operates within one-carbon metabolism; tetrahydrofolate interconversion. In terms of biological role, catalyzes the oxidation of 5,10-methylenetetrahydrofolate to 5,10-methenyltetrahydrofolate and then the hydrolysis of 5,10-methenyltetrahydrofolate to 10-formyltetrahydrofolate. The sequence is that of Bifunctional protein FolD from Bartonella tribocorum (strain CIP 105476 / IBS 506).